Reading from the N-terminus, the 939-residue chain is Protein translocase subunit SecA (939 aa).

ATP contacts are provided by residues glutamine 85, 103–107, and aspartate 504; that span reads GEGKT. Positions 850–939 are disordered; the sequence is PVQDGAERPS…KGGGGRRRKK (90 aa). The span at 854-864 shows a compositional bias: basic and acidic residues; it reads GAERPSLEKEG. Positions 924-939 are enriched in basic residues; sequence ERRKAQKGGGGRRRKK.

This sequence belongs to the SecA family. Monomer and homodimer. Part of the essential Sec protein translocation apparatus which comprises SecA, SecYEG and auxiliary proteins SecDF. Other proteins may also be involved.

It is found in the cell membrane. The protein localises to the cytoplasm. The enzyme catalyses ATP + H2O + cellular proteinSide 1 = ADP + phosphate + cellular proteinSide 2.. In terms of biological role, part of the Sec protein translocase complex. Interacts with the SecYEG preprotein conducting channel. Has a central role in coupling the hydrolysis of ATP to the transfer of proteins into and across the cell membrane, serving as an ATP-driven molecular motor driving the stepwise translocation of polypeptide chains across the membrane. The polypeptide is Protein translocase subunit SecA (Streptomyces griseus subsp. griseus (strain JCM 4626 / CBS 651.72 / NBRC 13350 / KCC S-0626 / ISP 5235)).